A 760-amino-acid chain; its full sequence is Serine/threonine-protein kinase dkf-1 (760 aa).

2 consecutive Phorbol-ester/DAG-type zinc fingers follow at residues 103 to 153 (PHVV…GIIV) and 194 to 244 (PHTL…PSNC). The PH domain occupies 316 to 444 (KNLEGWMIHF…QFIKESLQPP (129 aa)). Residues 464–725 (VLSDKTLGSG…IEKCLEHGWL (262 aa)) form the Protein kinase domain. ATP is bound by residues 470–478 (LGSGQFGTV) and lysine 493. Aspartate 589 serves as the catalytic Proton acceptor. Threonine 626 carries the phosphothreonine modification.

Belongs to the protein kinase superfamily. CAMK Ser/Thr protein kinase family. PKD subfamily. It depends on Mg(2+) as a cofactor. In terms of processing, prolonged phosphorylation at Thr-626 results in ubiquitination and degradation.

Its subcellular location is the cytoplasm. The protein localises to the membrane. The enzyme catalyses L-seryl-[protein] + ATP = O-phospho-L-seryl-[protein] + ADP + H(+). It carries out the reaction L-threonyl-[protein] + ATP = O-phospho-L-threonyl-[protein] + ADP + H(+). With respect to regulation, activated by DAG and phorbol esters. Phorbol-ester/DAG-type domain 1 binds phorbol ester with high affinity and mediates accumulation at the cell periphery. Phorbol-ester/DAG-type domain 2 binds phorbol ester with low affinity but may mediate initial contact, resulting in a conformational change allowing previously occluded domain 1 to anchor the kinase. Phosphorylation on Thr-626 is then also required for activation and may also result in a further conformational change. Functionally, converts transient diacylglycerol (DAG) signals into prolonged physiological effects, independently of PKC. Role in the regulation of growth and neuromuscular control of movement. Involved in immune response to S.aureus bacterium by activating transcription factor hlh-30 downstream of phospholipase plc-1. This chain is Serine/threonine-protein kinase dkf-1, found in Caenorhabditis briggsae.